We begin with the raw amino-acid sequence, 29 residues long: Toxin Bl-4 (29 aa).

Belongs to the long (4 C-C) scorpion toxin superfamily. Sodium channel inhibitor family. Beta subfamily. In terms of tissue distribution, expressed by the venom gland.

Its subcellular location is the secreted. Excitatory insect beta-toxins induce a spastic paralysis. They bind voltage-independently at site-4 of sodium channels (Nav) and shift the voltage of activation toward more negative potentials thereby affecting sodium channel activation and promoting spontaneous and repetitive firing. The fraction to which this protein belongs exhibits low toxicity and induces transient paralysis in all insects tested (the crickets A.domesticus). This Buthacus leptochelys (Egyptian fat-tailed scorpion) protein is Toxin Bl-4.